The following is a 1473-amino-acid chain: Ovostatin (1473 aa).

Positions 1–36 are cleaved as a signal peptide; it reads MHCFLGREILSFFCLTVRKMWLKFILAILLLHAAAG. N-linked (GlcNAc...) asparagine glycans are attached at residues Asn67, Asn82, Asn89, Asn191, Asn342, Asn403, Asn527, Asn588, Asn757, Asn1141, Asn1221, Asn1315, and Asn1347.

Belongs to the protease inhibitor I39 (alpha-2-macroglobulin) family. In terms of assembly, homotetramer, which consists of two pairs of disulfide-linked chains. Post-translationally, lacks the thioester bond found in other members of this family. Glycosylated; contains 56 glucosamine units per subunit.

It is found in the secreted. Functionally, is able to inhibit all four classes of proteinases by a unique 'trapping' mechanism. This protein has a peptide stretch, called the 'bait region' which contains specific cleavage sites for different proteinases. When a proteinase cleaves the bait region, a conformational change is induced in the protein which traps the proteinase. The entrapped enzyme remains active against low molecular weight substrates (activity against high molecular weight substrates is greatly reduced). This is Ovostatin from Gallus gallus (Chicken).